The following is a 356-amino-acid chain: Fructose-1,6-bisphosphatase class 1 (356 aa).

Mg(2+)-binding residues include E91, D113, L115, and D116. Substrate is bound by residues 116 to 119 and N208; that span reads DGSS. E280 is a Mg(2+) binding site.

The protein belongs to the FBPase class 1 family. Homotetramer. Mg(2+) is required as a cofactor.

Its subcellular location is the cytoplasm. The catalysed reaction is beta-D-fructose 1,6-bisphosphate + H2O = beta-D-fructose 6-phosphate + phosphate. Its pathway is carbohydrate biosynthesis; gluconeogenesis. The sequence is that of Fructose-1,6-bisphosphatase class 1 from Methylacidiphilum infernorum (isolate V4) (Methylokorus infernorum (strain V4)).